The chain runs to 414 residues: Probable protein phosphatase 2C 9 (414 aa).

The helical transmembrane segment at 15 to 37 (TATAAVAAAVSASAAAAVSSAID) threads the bilayer. The tract at residues 56 to 95 (LQAGEDGRPGKRQRLARTASGAPRPDEDSASERPSCGRTE) is disordered. The PPM-type phosphatase domain occupies 99–410 (RYGVTAVCGR…DNVSVVVVDL (312 aa)). Mn(2+) is bound by residues aspartate 136 and glycine 137. The segment covering 186 to 195 (GNRASTRSDD) has biased composition (basic and acidic residues). A disordered region spans residues 186 to 212 (GNRASTRSDDEPACPCEQQTPSRRDHA). Residue aspartate 319 coordinates Mn(2+). The interval 345-372 (APAARPSGVPSSAEAAETENGGAASVKG) is disordered. Positions 355–369 (SSAEAAETENGGAAS) are enriched in low complexity. A Mn(2+)-binding site is contributed by aspartate 401.

The protein belongs to the PP2C family. It depends on Mg(2+) as a cofactor. Mn(2+) serves as cofactor.

Its subcellular location is the membrane. It carries out the reaction O-phospho-L-seryl-[protein] + H2O = L-seryl-[protein] + phosphate. The enzyme catalyses O-phospho-L-threonyl-[protein] + H2O = L-threonyl-[protein] + phosphate. In Oryza sativa subsp. japonica (Rice), this protein is Probable protein phosphatase 2C 9.